The primary structure comprises 213 residues: Chromosome segregation in meiosis protein 2 (213 aa).

This sequence belongs to the CSM2 family. As to quaternary structure, component of the SHU complex composed of at least CSM2, PSY3, SHU1 and SHU2.

It is found in the cytoplasm. The protein resides in the nucleus. Functionally, involved in chromosome segregation during meiosis. Promotes efficient recombinational repair and functions in the protection of the genome from spontaneous and induced DNA damage like mutations and gross chromosomal rearrangements (GCRs). The sequence is that of Chromosome segregation in meiosis protein 2 (CSM2) from Saccharomyces cerevisiae (strain ATCC 204508 / S288c) (Baker's yeast).